Here is a 538-residue protein sequence, read N- to C-terminus: MALPYHILLFTVLLPSFTLTAPPPCRCMTSSSPYQEFLWRMRRPGNIDAPSHRSFSKGTPTFTAHTHMPRNCYNSATLCMHANTHYWTGKMINPSCPGGLGVTVCWTYFTHTGMSDGGGVQDQAREKHVKEVISQLTRVHSTSSPYKGLDLSKLHETLRTHTRLVSLFNTTLTGLHEVSAQNPTNCWICLPLDFRPYVSIPVPEEWNNFSTEINTTSVLVGPLVSNLEITHTSNLTCVKFSNTIDTTNSQCIRWVTPPTQIVCLPSGIFFVCGTSAYRCLNGSSESMCFLSFLVPPMTIYTEQDLYNYVVSKPRNKRVPILPFVIGAGVLGALGTGIGGITTSTQFYYKLSQELNGDMERVADSLVTLQDQLNSLAAVVLQNRRALDLLTAERGGTCLFLGEECCYYVNQSGIVTEKVKEIRDRIQRRAEELRNTGPWGLLSQWMPWILPFLGPLAAIILLLLFGPCIFNLLVNFVSSRIEAVKLQMEPKMQSKTKIYRRPLDRPASPRSDVNDIKCTPPEEISTAQPLLRPNSAGSS.

Residues 1-20 (MALPYHILLFTVLLPSFTLT) form the signal peptide. Over 21 to 443 (APPPCRCMTS…NTGPWGLLSQ (423 aa)) the chain is Extracellular. A glycan (N-linked (GlcNAc...) asparagine) is linked at Asn-169. The CXXC motif lies at 186-189 (CWIC). 3 disulfide bridges follow: Cys-186/Cys-189, Cys-186/Cys-405, and Cys-397/Cys-404. 4 N-linked (GlcNAc...) asparagine glycosylation sites follow: Asn-208, Asn-214, Asn-234, and Asn-281. Positions 320–340 (ILPFVIGAGVLGALGTGIGGI) are fusion peptide. The interval 380 to 396 (LQNRRALDLLTAERGGT) is immunosuppression. Residues 397–405 (CLFLGEECC) carry the CX6CC motif. N-linked (GlcNAc...) asparagine glycosylation is present at Asn-409. Residues 444–464 (WMPWILPFLGPLAAIILLLLF) form a helical membrane-spanning segment. The tract at residues 465–484 (GPCIFNLLVNFVSSRIEAVK) is essential for the fusiogenic function. Residues 465–538 (GPCIFNLLVN…LLRPNSAGSS (74 aa)) are Cytoplasmic-facing. A disordered region spans residues 496 to 538 (KIYRRPLDRPASPRSDVNDIKCTPPEEISTAQPLLRPNSAGSS).

Belongs to the gamma type-C retroviral envelope protein family. HERV class-I W env subfamily. As to quaternary structure, the mature envelope protein (Env) consists of a trimer of SU-TM heterodimers attached probably by a labile interchain disulfide bond. Interacts with the C-type lectin CD209/DC-SIGN. Post-translationally, specific enzymatic cleavages in vivo yield mature proteins. Envelope glycoproteins are synthesized as an inactive precursor that is heavily N-glycosylated and processed likely by furin in the Golgi to yield the mature SU and TM proteins. The cleavage site between SU and TM requires the minimal sequence [KR]-X-[KR]-R. In terms of processing, the CXXC motif is highly conserved across a broad range of retroviral envelope proteins. It is thought to participate in the formation of a labile disulfide bond possibly with the CX6CC motif present in the transmembrane protein.

It localises to the cell membrane. The protein resides in the virion. Functionally, this endogenous retroviral envelope protein has retained its original fusogenic properties and participates in trophoblast fusion and the formation of a syncytium during placenta morphogenesis. May recognize and induce fusion through binding of SLC1A4 and SLC1A5. Endogenous envelope proteins may have kept, lost or modified their original function during evolution. Retroviral envelope proteins mediate receptor recognition and membrane fusion during early infection. The surface protein (SU) mediates receptor recognition, while the transmembrane protein (TM) acts as a class I viral fusion protein. The protein may have at least 3 conformational states: pre-fusion native state, pre-hairpin intermediate state, and post-fusion hairpin state. During viral and target cell membrane fusion, the coiled coil regions (heptad repeats) assume a trimer-of-hairpins structure, positioning the fusion peptide in close proximity to the C-terminal region of the ectodomain. The formation of this structure appears to drive apposition and subsequent fusion of membranes. This chain is Syncytin-1 (ERVW-1), found in Gorilla gorilla gorilla (Western lowland gorilla).